We begin with the raw amino-acid sequence, 904 residues long: DNA polymerase I (904 aa).

In terms of domain architecture, 5'-3' exonuclease spans 186-279 (TPRQYPDFAA…DTLRLQPWDR (94 aa)). A 3'-5' exonuclease domain is found at 317-493 (RGGALAPGTV…LADALDAELA (177 aa)).

Belongs to the DNA polymerase type-A family. Single-chain monomer with multiple functions.

The enzyme catalyses DNA(n) + a 2'-deoxyribonucleoside 5'-triphosphate = DNA(n+1) + diphosphate. Its function is as follows. In addition to polymerase activity, this DNA polymerase exhibits 3'-5' and 5'-3' exonuclease activity. The polypeptide is DNA polymerase I (polA) (Mycobacterium bovis (strain ATCC BAA-935 / AF2122/97)).